We begin with the raw amino-acid sequence, 725 residues long: MSDSKCPFHHAPAEGTSNRDWWPNQLRLEILHQRSALSNPLGEEFNYAEAFKSLDLAAIKQDLTALMTDSQDWWPADFGHYGPLFIRMAWHSAGTYRTGDGRGGGGTGNQRFAPLNSWPDNVNLDKARRLLWPIKQKYGQKISWADLMILAGNVALESMGFKTFGFGGGRADIWEPEQDIYWGAEKTWLDDNRYSGDRDLENPLAAVQMGLIYVNPEGPNGNPDPVAAAKDIRETFARMAMDDEETVALIAGGHTFGKTHGAGDAANVGPEPEAAGLEEQGLGWRSSYGSGKAGDAITSGLEVTWTETPTQWSNNFFENLFGYEWELTKSPAGAHQWVPKGGAGADKIPDAHDPSKRHVPTMLTTDLSLRFDPAYEKISRRFYENPDQLADAFARAWFKLTHRDMGPRARYLGPEVPAEELIWQDPIPAVDHPLINDQDISALKSKILTSGLSVAQMVSTAWASASTFRGSDMRGGANGARIRLAPQNEWEVNQPDQLAQVLKTLEGVQAEFNSAQSDGKKVSLADIIVLAGCAGVEKAAQNAGHTIKVPFSPGRMDASQEQTDIEAFEVLEPIADGFRNYMKGKYAVSPEELLVDRAQLLTLTAPEMTVLIGGMRVLNANVGQSKHGVFTQRPESLTNDFFVNLLDMGTVWKATSKEEDLFEGRDRVTGDLKWTGTRIDLVFGSNSQLRALAEVYASSDAQERFLKDFVAAWTKVMNLDRFDLA.

Positions 90–213 (WHSAGTYRTG…LAAVQMGLIY (124 aa)) form a cross-link, tryptophyl-tyrosyl-methioninium (Trp-Tyr) (with M-239). The Proton acceptor role is filled by H91. Positions 213–239 (YVNPEGPNGNPDPVAAAKDIRETFARM) form a cross-link, tryptophyl-tyrosyl-methioninium (Tyr-Met) (with W-90). Residue H254 coordinates heme b.

The protein belongs to the peroxidase family. Peroxidase/catalase subfamily. Homodimer or homotetramer. Requires heme b as cofactor. In terms of processing, formation of the three residue Trp-Tyr-Met cross-link is important for the catalase, but not the peroxidase activity of the enzyme.

It catalyses the reaction H2O2 + AH2 = A + 2 H2O. It carries out the reaction 2 H2O2 = O2 + 2 H2O. Bifunctional enzyme with both catalase and broad-spectrum peroxidase activity. This Hahella chejuensis (strain KCTC 2396) protein is Catalase-peroxidase.